Consider the following 342-residue polypeptide: Anthranilate phosphoribosyltransferase (342 aa).

5-phospho-alpha-D-ribose 1-diphosphate-binding positions include glycine 79, 82-83 (GD), threonine 87, 89-92 (NVST), 107-115 (KHGNRAATS), and serine 119. Glycine 79 contributes to the anthranilate binding site. Serine 91 is a binding site for Mg(2+). Asparagine 110 contacts anthranilate. Arginine 165 provides a ligand contact to anthranilate. The Mg(2+) site is built by aspartate 224 and glutamate 225.

This sequence belongs to the anthranilate phosphoribosyltransferase family. In terms of assembly, homodimer. Requires Mg(2+) as cofactor.

It catalyses the reaction N-(5-phospho-beta-D-ribosyl)anthranilate + diphosphate = 5-phospho-alpha-D-ribose 1-diphosphate + anthranilate. It functions in the pathway amino-acid biosynthesis; L-tryptophan biosynthesis; L-tryptophan from chorismate: step 2/5. In terms of biological role, catalyzes the transfer of the phosphoribosyl group of 5-phosphorylribose-1-pyrophosphate (PRPP) to anthranilate to yield N-(5'-phosphoribosyl)-anthranilate (PRA). The chain is Anthranilate phosphoribosyltransferase from Rubrobacter xylanophilus (strain DSM 9941 / JCM 11954 / NBRC 16129 / PRD-1).